A 176-amino-acid polypeptide reads, in one-letter code: MVTKPARMYTRITGPAYTRKEFMGGVPYPKITTFIQGNQKKDFEIEMMLVAEEACQIRHTALEAARVSVNRKLLDAAGSDNYFLQIRPYPHQVIREHKMATGAGADRISSGMRAAFGRPVGTAARVYPGQIIMVGRVDRNNAKLLKDALHKASIKLPTPCKVVVTKGSKITESLGI.

It belongs to the universal ribosomal protein uL16 family.

In Picrophilus torridus (strain ATCC 700027 / DSM 9790 / JCM 10055 / NBRC 100828 / KAW 2/3), this protein is Large ribosomal subunit protein uL16.